We begin with the raw amino-acid sequence, 201 residues long: ATP-dependent Clp protease proteolytic subunit (201 aa).

The Nucleophile role is filled by serine 98. Histidine 123 is a catalytic residue.

It belongs to the peptidase S14 family. As to quaternary structure, fourteen ClpP subunits assemble into 2 heptameric rings which stack back to back to give a disk-like structure with a central cavity, resembling the structure of eukaryotic proteasomes.

The protein resides in the cytoplasm. The catalysed reaction is Hydrolysis of proteins to small peptides in the presence of ATP and magnesium. alpha-casein is the usual test substrate. In the absence of ATP, only oligopeptides shorter than five residues are hydrolyzed (such as succinyl-Leu-Tyr-|-NHMec, and Leu-Tyr-Leu-|-Tyr-Trp, in which cleavage of the -Tyr-|-Leu- and -Tyr-|-Trp bonds also occurs).. Its function is as follows. Cleaves peptides in various proteins in a process that requires ATP hydrolysis. Has a chymotrypsin-like activity. Plays a major role in the degradation of misfolded proteins. This Rickettsia akari (strain Hartford) protein is ATP-dependent Clp protease proteolytic subunit.